The chain runs to 306 residues: Methyl-CpG-binding domain-containing protein 7 (306 aa).

Over residues methionine 1 to alanine 11 the composition is skewed to polar residues. Residues methionine 1–isoleucine 21 form a disordered region. MBD domains lie at isoleucine 21–threonine 92, glycine 106–glutamine 171, and asparagine 172–proline 242. An asymmetric dimethylarginine mark is found at arginine 118, arginine 145, and arginine 174. Residues isoleucine 163–serine 306 form a required for interaction with PRMT11 region.

Interacts with PRMT11. Interacts (via C-terminus) with IDM2, but not with IDM1. Interacts with IDM3. Part of a complex made of MBD7, IDM1, IDM2 and IDM3. Methylated by PRMT11. As to expression, expressed in leaves, buds, flowers, stems, siliques, mature seeds and roots.

It is found in the nucleus. The protein resides in the chromosome. Functionally, transcriptional regulator that binds CpG islands in promoters where the DNA is methylated at position 5 of cytosine within CpG dinucleotides. May directly affect chromatin structure by inducing intra- and inter- chromatin compaction via bridging over multiple methylated CpG sites. Acts as an anti-silencing factor that prevents DNA hypermethylation and gene repression. Requires high mCG density for binding. Recognizes preferentially mCGs located in transposable elements. Required for active DNA demethylation. Prefers to target genomic loci around chromocenters. This is Methyl-CpG-binding domain-containing protein 7 from Arabidopsis thaliana (Mouse-ear cress).